A 210-amino-acid polypeptide reads, in one-letter code: Protein-methionine-sulfoxide reductase heme-binding subunit MsrQ (210 aa).

6 consecutive transmembrane segments (helical) span residues 8–28 (LAVF…AWIF), 37–57 (VLVE…MSMT), 75–95 (LGLW…LFIL), 110–130 (PYII…VTSN), 147–167 (LIYV…RADL), and 169–189 (EWAL…PMIT).

This sequence belongs to the MsrQ family. In terms of assembly, heterodimer of a catalytic subunit (MsrP) and a heme-binding subunit (MsrQ). FMN is required as a cofactor. Requires heme b as cofactor.

The protein localises to the cell inner membrane. Functionally, part of the MsrPQ system that repairs oxidized periplasmic proteins containing methionine sulfoxide residues (Met-O), using respiratory chain electrons. Thus protects these proteins from oxidative-stress damage caused by reactive species of oxygen and chlorine generated by the host defense mechanisms. MsrPQ is essential for the maintenance of envelope integrity under bleach stress, rescuing a wide series of structurally unrelated periplasmic proteins from methionine oxidation. MsrQ provides electrons for reduction to the reductase catalytic subunit MsrP, using the quinone pool of the respiratory chain. This is Protein-methionine-sulfoxide reductase heme-binding subunit MsrQ from Pseudomonas savastanoi pv. phaseolicola (strain 1448A / Race 6) (Pseudomonas syringae pv. phaseolicola (strain 1448A / Race 6)).